The chain runs to 255 residues: MEAGGAYNPRTVEEVFRDFKGRRAGMIKALTTDVQEFFRLCDPEKENLCLYGHPNEHWEVNLPAEEVPPELPEPVLGINFARDGMAEKDWLSLVAVHSDAWLLAVAFFFGARFGFDKADRKRLFNMVNDLPTIFEVVAGTAKKQGKDKSSVSNNSSNRSKSSSKRGSESRAKFSKPEPKDDEEEEEEGVEEEDEDEQGETQCGACGESYAADEFWICCDLCEMWFHGKCVKITPARAEHIKQYKCPSCSNKRARS.

Met-1 bears the N-acetylmethionine mark. The segment at 145 to 200 (GKDKSSVSNNSSNRSKSSSKRGSESRAKFSKPEPKDDEEEEEEGVEEEDEDEQGET) is disordered. Residues 150–160 (SVSNNSSNRSK) show a composition bias toward low complexity. The segment covering 165 to 178 (RGSESRAKFSKPEP) has biased composition (basic and acidic residues). Residues 179-198 (KDDEEEEEEGVEEEDEDEQG) are compositionally biased toward acidic residues. Residues 199–251 (ETQCGACGESYAADEFWICCDLCEMWFHGKCVKITPARAEHIKQYKCPSCSNK) form a PHD-type zinc finger.

Belongs to the Alfin family. In terms of assembly, interacts with H3K4me3 and to a lesser extent with H3K4me2. Ubiquitously expressed.

It localises to the nucleus. Functionally, histone-binding component that specifically recognizes H3 tails trimethylated on 'Lys-4' (H3K4me3), which mark transcription start sites of virtually all active genes. In Arabidopsis thaliana (Mouse-ear cress), this protein is PHD finger protein ALFIN-LIKE 4 (AL4).